The chain runs to 89 residues: MKKDIHPDYHPVVFKDSATGKQFLTRSTATSDRTVEWEDGNEYPLIVVDITSESHPFWTGAQRVMDTAGRVEKFQRRYGGMARRKKKTQ.

Belongs to the bacterial ribosomal protein bL31 family. Type B subfamily. In terms of assembly, part of the 50S ribosomal subunit.

The polypeptide is Large ribosomal subunit protein bL31B (Corynebacterium urealyticum (strain ATCC 43042 / DSM 7109)).